The primary structure comprises 470 residues: Rhamnulokinase (470 aa).

ATP is bound at residue 12–16 (ASSGR). Residues Ala80 and 237–239 (HDT) contribute to the substrate site. Residue Asp238 is the Proton acceptor of the active site. Thr259 serves as a coordination point for ATP. Asn296 contributes to the substrate binding site. Residue Gln304 coordinates ATP. A disulfide bridge links Cys353 with Cys370. Residue Gly402 coordinates ATP.

This sequence belongs to the rhamnulokinase family. Mg(2+) is required as a cofactor.

It catalyses the reaction L-rhamnulose + ATP = L-rhamnulose 1-phosphate + ADP + H(+). The protein operates within carbohydrate degradation; L-rhamnose degradation; glycerone phosphate from L-rhamnose: step 2/3. Involved in the catabolism of L-rhamnose (6-deoxy-L-mannose). Catalyzes the transfer of the gamma-phosphate group from ATP to the 1-hydroxyl group of L-rhamnulose to yield L-rhamnulose 1-phosphate. The sequence is that of Rhamnulokinase from Oceanobacillus iheyensis (strain DSM 14371 / CIP 107618 / JCM 11309 / KCTC 3954 / HTE831).